The primary structure comprises 85 residues: BmK AGP-SYPU2 (85 aa).

Positions 1–19 (MNYMVIISLALLVMTGVES) are cleaved as a signal peptide. The LCN-type CS-alpha/beta domain occupies 21–83 (KDGYIADDRN…ARIMKPGRCN (63 aa)). Disulfide bonds link C31–C82, C35–C55, C41–C65, and C45–C67.

This sequence belongs to the long (4 C-C) scorpion toxin superfamily. Sodium channel inhibitor family. Alpha subfamily. Expressed by the venom gland.

Its subcellular location is the secreted. Alpha toxins bind voltage-independently at site-3 of sodium channels (Nav) and inhibit the inactivation of the activated channels, thereby blocking neuronal transmission. Shows analgesic activity when intraperitoneally injected into mice. The sequence is that of BmK AGP-SYPU2 from Olivierus martensii (Manchurian scorpion).